The chain runs to 449 residues: Glucose-6-phosphate isomerase (449 aa).

Catalysis depends on E291, which acts as the Proton donor. Catalysis depends on residues H312 and K426.

It belongs to the GPI family.

Its subcellular location is the cytoplasm. The catalysed reaction is alpha-D-glucose 6-phosphate = beta-D-fructose 6-phosphate. It functions in the pathway carbohydrate biosynthesis; gluconeogenesis. Its pathway is carbohydrate degradation; glycolysis; D-glyceraldehyde 3-phosphate and glycerone phosphate from D-glucose: step 2/4. Functionally, catalyzes the reversible isomerization of glucose-6-phosphate to fructose-6-phosphate. The polypeptide is Glucose-6-phosphate isomerase (Streptococcus pyogenes serotype M6 (strain ATCC BAA-946 / MGAS10394)).